The primary structure comprises 554 residues: Macrophage colony-stimulating factor 1 (554 aa).

An N-terminal signal peptide occupies residues 1 to 32 (MTAPGAAGRCPPTTWLGSLLLLVCLLASRSIT). The Lumenal portion of the chain corresponds to 33-496 (EEVSEYCSHM…GSFSPQLQES (464 aa)). 3 disulfides stabilise this stretch: Cys39-Cys122, Cys80-Cys171, and Cys134-Cys178. Residues Asn154 and Asn172 are each glycosylated (N-linked (GlcNAc...) asparagine). Residues 224–488 (EDSEGTEGSS…TGHERQSEGS (265 aa)) are disordered. Thr266 is modified (phosphothreonine; by FAM20C). O-linked (Xyl...) (chondroitin sulfate) serine glycosylation is present at Ser309. Residues 344 to 354 (LSASSPLPASA) are compositionally biased toward low complexity. O-linked (GalNAc...) threonine glycosylation is found at Thr363 and Thr365. Positions 404–433 (RISSLRPQGLSNPSTLSAQPQLSRSHSSGS) are enriched in polar residues. Positions 406–426 (SSLRPQGLSNPSTLSAQPQLS) are O-glycosylated at one site. The span at 440–453 (LEGRRSTRDRRSPA) shows a compositional bias: basic and acidic residues. The helical transmembrane segment at 497–517 (VFHLLVPSVILVLLAVGGLLF) threads the bilayer. The Cytoplasmic segment spans residues 518-554 (YRWRRRSHQEPQRADSPLEQPEGSPLTQDDRQVELPV). The tract at residues 526–554 (QEPQRADSPLEQPEGSPLTQDDRQVELPV) is disordered. Basic and acidic residues predominate over residues 545–554 (QDDRQVELPV).

Homodimer or heterodimer; disulfide-linked. Likely to exist in multiple forms: homodimer consisting of 2 identical 150-200 kDa proteoglycan subunits, heterodimer consisting of a 150-200 kDa proteoglycan subunit and a truncated 43 kDa subunit, and homodimer consisting of 2 identical 43 kDa subunits. Interacts with CSF1R. N-glycosylated. Post-translationally, O-glycosylated; contains chondroitin sulfate. O-glycosylated with core 1 or possibly core 8 glycans. In terms of processing, O-glycosylated.

Its subcellular location is the cell membrane. The protein localises to the secreted. It localises to the extracellular space. Functionally, cytokine that plays an essential role in the regulation of survival, proliferation and differentiation of hematopoietic precursor cells, especially mononuclear phagocytes, such as macrophages and monocytes. Promotes the release of pro-inflammatory chemokines, and thereby plays an important role in innate immunity and in inflammatory processes. Plays an important role in the regulation of osteoclast proliferation and differentiation, the regulation of bone resorption, and is required for normal bone development. Required for normal male and female fertility. Promotes reorganization of the actin cytoskeleton, regulates formation of membrane ruffles, cell adhesion and cell migration. Plays a role in lipoprotein clearance. This chain is Macrophage colony-stimulating factor 1 (CSF1), found in Homo sapiens (Human).